The following is a 736-amino-acid chain: 1,4-alpha-glucan branching enzyme GlgB (736 aa).

Residue Asp-415 is the Nucleophile of the active site. The Proton donor role is filled by Glu-470.

The protein belongs to the glycosyl hydrolase 13 family. GlgB subfamily. Monomer.

The catalysed reaction is Transfers a segment of a (1-&gt;4)-alpha-D-glucan chain to a primary hydroxy group in a similar glucan chain.. The protein operates within glycan biosynthesis; glycogen biosynthesis. Functionally, catalyzes the formation of the alpha-1,6-glucosidic linkages in glycogen by scission of a 1,4-alpha-linked oligosaccharide from growing alpha-1,4-glucan chains and the subsequent attachment of the oligosaccharide to the alpha-1,6 position. This chain is 1,4-alpha-glucan branching enzyme GlgB, found in Burkholderia cenocepacia (strain HI2424).